We begin with the raw amino-acid sequence, 1177 residues long: Phospholipid-transporting ATPase IF (1177 aa).

The Cytoplasmic segment spans residues 1-55 (MWRWIRQQLGFDPPHQSDTRTIYVANRFPQNGLYTPQKFIDNRIISSKYTVWNFV). The chain crosses the membrane as a helical span at residues 56–77 (PKNLFEQFRRVANFYFLIIFLV). Residues 78-82 (QLMID) lie on the Extracellular side of the membrane. Residues 83-104 (TPTSPVTSGLPLFFVITVTAIK) form a helical membrane-spanning segment. Residues 105-289 (QGYEDWLRHN…SAVEKSMNTF (185 aa)) lie on the Cytoplasmic side of the membrane. The helical transmembrane segment at 290–311 (LIIYLVILISEAVISTILKYTW) threads the bilayer. Residues 312-341 (QAEEKWDEPWYNQKTEHQRNSSKILRFISD) are Extracellular-facing. A helical transmembrane segment spans residues 342–359 (FLAFLVLYNFIIPISLYV). Topologically, residues 360–876 (TVEMQKFLGS…HGHFYYIRIA (517 aa)) are cytoplasmic. Residue Asp-407 is the 4-aspartylphosphate intermediate of the active site. Residues Asp-407, Lys-408, Thr-409, Glu-531, Phe-572, Lys-595, Arg-626, Thr-706, Gly-707, Asp-708, Arg-794, and Lys-800 each coordinate ATP. Asp-407 contributes to the Mg(2+) binding site. Thr-409 serves as a coordination point for Mg(2+). Asp-821 is a binding site for Mg(2+). Residues Asn-824 and Asp-825 each contribute to the ATP site. Asp-825 contributes to the Mg(2+) binding site. The helical transmembrane segment at 877–898 (TLVQYFFYKNVCFITPQFLYQF) threads the bilayer. Residues 899-910 (YCLFSQQTLYDS) are Extracellular-facing. A helical transmembrane segment spans residues 911 to 930 (VYLTLYNICFTSLPILIYSL). Residues 931–960 (LEQHVDPHVLQNKPTLYRDISKNRLLSIKT) lie on the Cytoplasmic side of the membrane. The helical transmembrane segment at 961 to 982 (FLYWTILGFSHAFIFFFGSYLL) threads the bilayer. Residues 983-997 (IGKDTSLLGNGQMFG) lie on the Extracellular side of the membrane. The chain crosses the membrane as a helical span at residues 998–1020 (NWTFGTLVFTVMVITVTVKMALE). Residues 1021-1025 (THFWT) are Cytoplasmic-facing. The helical transmembrane segment at 1026 to 1047 (WINHLVTWGSIIFYFVFSLFYG) threads the bilayer. The Extracellular portion of the chain corresponds to 1048–1065 (GILWPFLGSQNMYFVFIQ). A helical transmembrane segment spans residues 1066 to 1090 (LLSSGSAWFAIILMVVTCLFLDIIK). Over 1091–1177 (KVFDRHLHPT…TLSTMDSSTC (87 aa)) the chain is Cytoplasmic. A Phosphoserine modification is found at Ser-1154.

Belongs to the cation transport ATPase (P-type) (TC 3.A.3) family. Type IV subfamily. Component of a P4-ATPase flippase complex which consists of a catalytic alpha subunit ATP11B and an accessory beta subunit TMEM30A. It depends on Mg(2+) as a cofactor.

It localises to the recycling endosome membrane. Its subcellular location is the early endosome. It is found in the endoplasmic reticulum. The protein localises to the golgi apparatus. The protein resides in the trans-Golgi network. It catalyses the reaction ATP + H2O + phospholipidSide 1 = ADP + phosphate + phospholipidSide 2.. The catalysed reaction is a 1,2-diacyl-sn-glycero-3-phospho-L-serine(out) + ATP + H2O = a 1,2-diacyl-sn-glycero-3-phospho-L-serine(in) + ADP + phosphate + H(+). It carries out the reaction a 1,2-diacyl-sn-glycero-3-phosphoethanolamine(out) + ATP + H2O = a 1,2-diacyl-sn-glycero-3-phosphoethanolamine(in) + ADP + phosphate + H(+). The ATPase activity is up-regulated by aminophospholipids PS and PE. In terms of biological role, catalytic component of a P4-ATPase flippase complex which catalyzes the hydrolysis of ATP coupled to the transport of aminophospholipids, phosphatidylserines (PS) and phosphatidylethanolamines (PE), from the outer to the inner leaflet of intracellular membranes. May contribute to the maintenance of membrane lipid asymmetry in endosome compartment. This is Phospholipid-transporting ATPase IF (ATP11B) from Homo sapiens (Human).